The primary structure comprises 600 residues: Sodium- and chloride-dependent betaine transporter (600 aa).

Residues 1-31 (MGTSEHVPLPTDEAKAKELEQSQHSEEPDRG) are disordered. The Cytoplasmic segment spans residues 1-38 (MGTSEHVPLPTDEAKAKELEQSQHSEEPDRGQWTGKFD). Residues 12–30 (DEAKAKELEQSQHSEEPDR) show a composition bias toward basic and acidic residues. A run of 3 helical transmembrane segments spans residues 39–59 (FLMS…FPYL), 68–88 (FLVV…LMEV), and 116–136 (VVIA…AMFY). The Extracellular segment spans residues 137-207 (MISSIAWVFP…DTGDISEFGG (71 aa)). A glycan (N-linked (GlcNAc...) asparagine) is linked at Asn165. A run of 2 helical transmembrane segments spans residues 208-228 (IQWE…FALW) and 237-257 (FVYF…IRGL). Residue Asn273 is glycosylated (N-linked (GlcNAc...) asparagine). Helical transmembrane passes span 286–306 (AGTQ…ALGS), 321–341 (MCFI…SILG), 378–398 (VFAV…QVCM), 420–440 (SLGI…THSG), 454–474 (GYAL…GFGA), 499–519 (FCAP…YHPV), and 536–556 (WFLS…YLFF). Residues 557–600 (TNKHLTLKERVRKGLNLDGSFESPAKKNLVNNAEELKFIESSSQ) are Cytoplasmic-facing.

Belongs to the sodium:neurotransmitter symporter (SNF) family. In terms of tissue distribution, highly expressed in the head, the excretory canal, tail hypodermal cells, epidermis and vulval epithelial cells. Expressed in the excretory canal-associated neuron and in some non-amphidial sensory neurons in the head (at protein level).

The protein resides in the cell membrane. Functionally, betaine transporter dependent on Na(+) and Cl(-) ions that functions primarily in the epidermis to clear betaine from the extracellular space. Elicits current in response to betaine but not in response to GABA, L-carnitine, sarcosine, glycine or dimethylglycine. The protein is Sodium- and chloride-dependent betaine transporter of Caenorhabditis elegans.